Here is a 43-residue protein sequence, read N- to C-terminus: Metallothionein-2 (43 aa).

The residue at position 1 (Met1) is a Blocked amino end (Met).

It belongs to the metallothionein superfamily. Type 5 family.

Its function is as follows. This protein binds cations of several transition elements. Thought to be involved in metal ion homeostasis. This is Metallothionein-2 (MtnB) from Drosophila melanogaster (Fruit fly).